A 353-amino-acid polypeptide reads, in one-letter code: Photosystem II D2 protein (353 aa).

At Thr2 the chain carries N-acetylthreonine. Thr2 is modified (phosphothreonine). The helical transmembrane segment at 41–61 threads the bilayer; the sequence is CAYFALGGWFTGTTFVTSWYT. His118 contributes to the chlorophyll a binding site. A helical membrane pass occupies residues 125–141; it reads GFMLRQFELARSVQLRP. Positions 130 and 143 each coordinate pheophytin a. Residues 153–166 traverse the membrane as a helical segment; it reads VFVSVFLIYPLGQS. His198 lines the chlorophyll a pocket. The helical transmembrane segment at 208–228 threads the bilayer; sequence AALLCAIHGATVENTLFEDGD. Residues His215 and Phe262 each coordinate a plastoquinone. His215 provides a ligand contact to Fe cation. His269 contacts Fe cation. Residues 279 to 295 traverse the membrane as a helical segment; it reads GLWMSAIGVVGLALNLR.

It belongs to the reaction center PufL/M/PsbA/D family. As to quaternary structure, PSII is composed of 1 copy each of membrane proteins PsbA, PsbB, PsbC, PsbD, PsbE, PsbF, PsbH, PsbI, PsbJ, PsbK, PsbL, PsbM, PsbT, PsbX, PsbY, PsbZ, Psb30/Ycf12, at least 3 peripheral proteins of the oxygen-evolving complex and a large number of cofactors. It forms dimeric complexes. The cofactor is The D1/D2 heterodimer binds P680, chlorophylls that are the primary electron donor of PSII, and subsequent electron acceptors. It shares a non-heme iron and each subunit binds pheophytin, quinone, additional chlorophylls, carotenoids and lipids. There is also a Cl(-1) ion associated with D1 and D2, which is required for oxygen evolution. The PSII complex binds additional chlorophylls, carotenoids and specific lipids..

It localises to the plastid. Its subcellular location is the chloroplast thylakoid membrane. The catalysed reaction is 2 a plastoquinone + 4 hnu + 2 H2O = 2 a plastoquinol + O2. Functionally, photosystem II (PSII) is a light-driven water:plastoquinone oxidoreductase that uses light energy to abstract electrons from H(2)O, generating O(2) and a proton gradient subsequently used for ATP formation. It consists of a core antenna complex that captures photons, and an electron transfer chain that converts photonic excitation into a charge separation. The D1/D2 (PsbA/PsbD) reaction center heterodimer binds P680, the primary electron donor of PSII as well as several subsequent electron acceptors. D2 is needed for assembly of a stable PSII complex. The sequence is that of Photosystem II D2 protein from Cryptomeria japonica (Japanese cedar).